The chain runs to 334 residues: MESPCRTITLEKNGTSLEPVHYSVQGKEILQIFKENFQKEDPVLFLDGTAGEGGHSFLFLKEFPNSRIILCDRDPIMLSRALTRLSDFSERVVSIQTNFSEINQKLLTSYGIDQTPQGILLDLGISTFHLFHSGRGFSFRESEPLDMRLNPNSGQSAEEILNIYPKDRLMNIFYTYGEERWSKKIAEVIVETRKQNSISTTFELANLVSKIIPRKFWPPGRHPATRIFQALRIEVNQELAHIENGLKLLLDLLRLGGVIQVISFHSLEDRIVKNSFRDYAKQNGFELLTKKPIFPSQEEIDENPASRSAKLRILRKTKSVDKKYRNKNFEEEEE.

S-adenosyl-L-methionine-binding positions include 53–55 (GGH), Asp72, Phe99, Asp122, and His129.

Belongs to the methyltransferase superfamily. RsmH family.

The protein resides in the cytoplasm. The catalysed reaction is cytidine(1402) in 16S rRNA + S-adenosyl-L-methionine = N(4)-methylcytidine(1402) in 16S rRNA + S-adenosyl-L-homocysteine + H(+). In terms of biological role, specifically methylates the N4 position of cytidine in position 1402 (C1402) of 16S rRNA. In Leptospira interrogans serogroup Icterohaemorrhagiae serovar Lai (strain 56601), this protein is Ribosomal RNA small subunit methyltransferase H.